Here is a 113-residue protein sequence, read N- to C-terminus: Large ribosomal subunit protein bL20c (113 aa).

It belongs to the bacterial ribosomal protein bL20 family.

It localises to the plastid. It is found in the chloroplast. Binds directly to 23S ribosomal RNA and is necessary for the in vitro assembly process of the 50S ribosomal subunit. It is not involved in the protein synthesizing functions of that subunit. This Staurastrum punctulatum (Green alga) protein is Large ribosomal subunit protein bL20c.